The sequence spans 2335 residues: Histone-lysine N-methyltransferase ATXR3 (2335 aa).

Disordered regions lie at residues 30–142 (NESK…FKDE), 332–355 (STGN…SYAD), 371–556 (CSRS…SSSK), and 902–961 (DQVP…KTDT). Composition is skewed to polar residues over residues 31–46 (ESKT…TSIA) and 53–62 (QPANKPSASS). Positions 65-84 (VKKKRIVKVIRKVVKRRPKQ) are enriched in basic residues. Positions 67-74 (KKRIVKVI) match the Nuclear localization signal 1 motif. The segment covering 97-112 (PPSQVVQLPAESQLQI) has biased composition (polar residues). Basic and acidic residues-rich tracts occupy residues 340 to 353 (HGAE…KHSY), 371 to 390 (CSRS…RLYR), and 430 to 452 (WSPH…RERS). Positions 461 to 475 (HARKRSPRDRRHHDY) are enriched in basic residues. Basic and acidic residues-rich tracts occupy residues 485–498 (SPHD…RRDY), 507–548 (QSDR…ESNG), and 910–921 (PRAKVRSKERCP). Residues 527-534 (ERRDCQTG) carry the Nuclear localization signal 2 motif. A compositionally biased stretch (low complexity) spans 922-932 (SRPARPSPASS). Residues 941–961 (SHSQSTASTGQDSQGLWKTDT) show a composition bias toward polar residues. The Nuclear localization signal 3 signature appears at 1382 to 1389 (ARRSSAIL). Positions 1532–1572 (NRKSFSSESDTSSELSDNGKSDNYSSASASESESDIRSEGR) are disordered. Low complexity predominate over residues 1535–1547 (SFSSESDTSSELS). One can recognise an SET domain in the interval 1765-1904 (KEIESRSDDK…YGEEITFDYN (140 aa)). Zn(2+) is bound at residue cysteine 1868. Tyrosine 1903 contacts S-adenosyl-L-methionine. The Post-SET domain maps to 1914 to 1930 (EASVCLCGSQVCRGSYL). The Zn(2+) site is built by cysteine 1918, cysteine 1920, and cysteine 1925.

Belongs to the class V-like SAM-binding methyltransferase superfamily. Histone-lysine methyltransferase family. TRX/MLL subfamily. Expressed in roots, leaves, stems and inflorescences.

The protein localises to the nucleus. The enzyme catalyses L-lysyl(4)-[histone H3] + 3 S-adenosyl-L-methionine = N(6),N(6),N(6)-trimethyl-L-lysyl(4)-[histone H3] + 3 S-adenosyl-L-homocysteine + 3 H(+). Functionally, histone methyltransferase specifically required for trimethylation of 'Lys-4' of histone H3 (H3K4me3) and is crucial for both sporophyte and gametophyte development. Function as a diurnal 'writer' to counteract the nocturne 'eraser' demethylase activity of JMJ14 thus orchestrating the circadian rhythm of histone modifications (e.g. H3K4me3) and modulating the rhythmic expression of diurnal target genes; this mechanism relies also on the circadian clock oscillators CCA1 and LHY. This is Histone-lysine N-methyltransferase ATXR3 from Arabidopsis thaliana (Mouse-ear cress).